A 269-amino-acid polypeptide reads, in one-letter code: Glutamate racemase (269 aa).

Residues 14 to 15 (DS) and 46 to 47 (YS) each bind substrate. The active-site Proton donor/acceptor is cysteine 78. 79–80 (NT) is a substrate binding site. The Proton donor/acceptor role is filled by cysteine 189. 190–191 (TH) serves as a coordination point for substrate.

This sequence belongs to the aspartate/glutamate racemases family.

The catalysed reaction is L-glutamate = D-glutamate. It participates in cell wall biogenesis; peptidoglycan biosynthesis. In terms of biological role, provides the (R)-glutamate required for cell wall biosynthesis. The sequence is that of Glutamate racemase from Haemophilus influenzae (strain ATCC 51907 / DSM 11121 / KW20 / Rd).